The chain runs to 342 residues: Serine/threonine-protein kinase ISR1 (342 aa).

One can recognise a Protein kinase domain in the interval 59 to 342 (WRLTRVLGCG…SNARVAEHAF (284 aa)). ATP is bound by residues 65–73 (LGCGSVACV) and Lys-84. Asp-190 functions as the Proton acceptor in the catalytic mechanism.

Belongs to the protein kinase superfamily. Ser/Thr protein kinase family.

The catalysed reaction is L-seryl-[protein] + ATP = O-phospho-L-seryl-[protein] + ADP + H(+). It carries out the reaction L-threonyl-[protein] + ATP = O-phospho-L-threonyl-[protein] + ADP + H(+). Its function is as follows. Probable serine/threonine protein kinase which may function redundantly with MPK1-independent branch of the PCK1 pathway. In Eremothecium gossypii (strain ATCC 10895 / CBS 109.51 / FGSC 9923 / NRRL Y-1056) (Yeast), this protein is Serine/threonine-protein kinase ISR1 (ISR1).